The primary structure comprises 441 residues: Protein eva-1 homolog C (441 aa).

The tract at residues 1 to 23 (MLLPGPARQPPTPQPVQHPGLRR) is disordered. An N-terminal signal peptide occupies residues 1–48 (MLLPGPARQPPTPQPVQHPGLRRQVEPPGQLLRLFYCTVLVCSKEISA). Residues 7-16 (ARQPPTPQPV) are compositionally biased toward pro residues. At 49–322 (LTDFSGYLTK…AYIRAHPERA (274 aa)) the chain is on the extracellular side. N-linked (GlcNAc...) asparagine glycosylation occurs at Asn62. The 93-residue stretch at 67-159 (ACDGDYLNLQ…KYLLVSFKCQ (93 aa)) folds into the SUEL-type lectin 1 domain. Asn165 carries an N-linked (GlcNAc...) asparagine glycan. The SUEL-type lectin 2 domain maps to 168–260 (VCEDQELKLH…KYLTVTYACV (93 aa)). Residues 323 to 343 (ALLFVSSVCIGLALTLCALVI) traverse the membrane as a helical segment. Residues 344-441 (RESCAKDFRD…SLPRNMGQFY (98 aa)) are Cytoplasmic-facing. The disordered stretch occupies residues 362-391 (VPGSDKVEEDSEDEEEEEDSSESDFPGELS). Residues 368–383 (VEEDSEDEEEEEDSSE) are compositionally biased toward acidic residues.

Belongs to the EVA1 family.

The protein localises to the cell membrane. Functionally, binds heparin. The sequence is that of Protein eva-1 homolog C (EVA1C) from Pan troglodytes (Chimpanzee).